A 157-amino-acid chain; its full sequence is Crossover junction endodeoxyribonuclease RuvC (157 aa).

Catalysis depends on residues aspartate 7, glutamate 67, and aspartate 140. Mg(2+) contacts are provided by aspartate 7, glutamate 67, and aspartate 140.

This sequence belongs to the RuvC family. Homodimer which binds Holliday junction (HJ) DNA. The HJ becomes 2-fold symmetrical on binding to RuvC with unstacked arms; it has a different conformation from HJ DNA in complex with RuvA. In the full resolvosome a probable DNA-RuvA(4)-RuvB(12)-RuvC(2) complex forms which resolves the HJ. Requires Mg(2+) as cofactor.

It is found in the cytoplasm. It catalyses the reaction Endonucleolytic cleavage at a junction such as a reciprocal single-stranded crossover between two homologous DNA duplexes (Holliday junction).. Functionally, the RuvA-RuvB-RuvC complex processes Holliday junction (HJ) DNA during genetic recombination and DNA repair. Endonuclease that resolves HJ intermediates. Cleaves cruciform DNA by making single-stranded nicks across the HJ at symmetrical positions within the homologous arms, yielding a 5'-phosphate and a 3'-hydroxyl group; requires a central core of homology in the junction. The consensus cleavage sequence is 5'-(A/T)TT(C/G)-3'. Cleavage occurs on the 3'-side of the TT dinucleotide at the point of strand exchange. HJ branch migration catalyzed by RuvA-RuvB allows RuvC to scan DNA until it finds its consensus sequence, where it cleaves and resolves the cruciform DNA. This Rickettsia africae (strain ESF-5) protein is Crossover junction endodeoxyribonuclease RuvC.